Here is a 71-residue protein sequence, read N- to C-terminus: MKTQFVILIVAIVILQLISQSEALWGALLGLGSTLLSKLGKRGVQNMDQFDDIFEPELSEADLRYLQDLLR.

A signal peptide spans 1-23 (MKTQFVILIVAIVILQLISQSEA). Leucine 39 carries the post-translational modification Leucine amide. The propeptide occupies 40-71 (GKRGVQNMDQFDDIFEPELSEADLRYLQDLLR).

Belongs to the non-disulfide-bridged peptide (NDBP) superfamily. Short antimicrobial peptide (group 4) family. Expressed by the venom gland.

Its subcellular location is the secreted. It localises to the target cell membrane. Functionally, antimicrobial peptide with potent activity against bacteria S.aureus (MIC=9.3 uM), weak activity against E.coli (MIC&gt;100 uM), and weak activity against pathogenic yeasts C.albicans (MIC=100 uM) and C.glabrata (MIC=100 uM). Is not very effective against P.aeruginosa (MIC&gt;300 uM). Also provokes high hemolysis on human erythrocytes (HC(50)=4.8 uM). The chain is Antimicrobial peptide VpCT4 from Mesomexovis punctatus (Scorpion).